A 55-amino-acid polypeptide reads, in one-letter code: Large ribosomal subunit protein bL33 (55 aa).

It belongs to the bacterial ribosomal protein bL33 family.

The polypeptide is Large ribosomal subunit protein bL33 (Sinorhizobium medicae (strain WSM419) (Ensifer medicae)).